We begin with the raw amino-acid sequence, 232 residues long: MNKVITDLDKALSGLKDGDTILVGGFGLCGIPEYAIDYIYKKGIKDLIVVSNNCGVDDFGLGILLEKKQIKKIIASYVGENKIFESQMLNGEIEVVLTPQGTLAENLRAGGAGIPAYYTPTGVGTLIAQGKESREFNGKEYILERAITGDYGLIKAYKSDTLGNLVFRKTARNFNPLCAMAAKICVAEVEEIVPAGELDPDEIHLPGIYVQHIYKGEKFEKRIEKTTTRSAK.

24–30 provides a ligand contact to CoA; that stretch reads GGFGLCG.

It belongs to the 3-oxoacid CoA-transferase subunit A family. As to quaternary structure, heterodimer of a subunit A and a subunit B.

It catalyses the reaction a 3-oxo acid + succinyl-CoA = a 3-oxoacyl-CoA + succinate. This Helicobacter pylori (strain J99 / ATCC 700824) (Campylobacter pylori J99) protein is Succinyl-CoA:3-ketoacid coenzyme A transferase subunit A (scoA).